We begin with the raw amino-acid sequence, 60 residues long: Large ribosomal subunit protein bL32 (60 aa).

Belongs to the bacterial ribosomal protein bL32 family.

The chain is Large ribosomal subunit protein bL32 from Streptococcus suis (strain 05ZYH33).